The sequence spans 69 residues: MPQLDTSTWLLTITLMILALFCIYQSKMINQTMISIPPQDKKVIKPTTQLPWESKWTKIYLPHSSPLLS.

A helical transmembrane segment spans residues 8–24; it reads TWLLTITLMILALFCIY. An N6-acetyllysine; alternate modification is found at lysine 55. The residue at position 55 (lysine 55) is an N6-succinyllysine; alternate. Lysine 58 carries the N6-acetyllysine modification.

Belongs to the ATPase protein 8 family. As to quaternary structure, component of the ATP synthase complex composed at least of ATP5F1A/subunit alpha, ATP5F1B/subunit beta, ATP5MC1/subunit c (homooctomer), MT-ATP6/subunit a, MT-ATP8/subunit 8, ATP5ME/subunit e, ATP5MF/subunit f, ATP5MG/subunit g, ATP5MK/subunit k, ATP5MJ/subunit j, ATP5F1C/subunit gamma, ATP5F1D/subunit delta, ATP5F1E/subunit epsilon, ATP5PF/subunit F6, ATP5PB/subunit b, ATP5PD/subunit d, ATP5PO/subunit OSCP. ATP synthase complex consists of a soluble F(1) head domain (subunits alpha(3) and beta(3)) - the catalytic core - and a membrane F(0) domain - the membrane proton channel (subunits c, a, 8, e, f, g, k and j). These two domains are linked by a central stalk (subunits gamma, delta, and epsilon) rotating inside the F1 region and a stationary peripheral stalk (subunits F6, b, d, and OSCP). Interacts with PRICKLE3.

It is found in the mitochondrion membrane. In terms of biological role, subunit 8, of the mitochondrial membrane ATP synthase complex (F(1)F(0) ATP synthase or Complex V) that produces ATP from ADP in the presence of a proton gradient across the membrane which is generated by electron transport complexes of the respiratory chain. ATP synthase complex consist of a soluble F(1) head domain - the catalytic core - and a membrane F(1) domain - the membrane proton channel. These two domains are linked by a central stalk rotating inside the F(1) region and a stationary peripheral stalk. During catalysis, ATP synthesis in the catalytic domain of F(1) is coupled via a rotary mechanism of the central stalk subunits to proton translocation. In vivo, can only synthesize ATP although its ATP hydrolase activity can be activated artificially in vitro. Part of the complex F(0) domain. The chain is ATP synthase F(0) complex subunit 8 from Osphranter robustus (Wallaroo).